A 422-amino-acid polypeptide reads, in one-letter code: SVTEHFNVYKATRPYXXXCADCGDGYFCYSPVAIEKIRDEASDGMLKIQVSAQIGLDKAGTHAHTKLRYMAGHDVQESKRDSLRVYTSAACSIHGTMGHFIVAHCPPGDYLKVSFEDADSHVKACKVQYKHNPLPVGREKFVVRPHFGVELPCTSYQLTTAPTDEEIDMHTPPDIPDRTLLSQTAGNVKITAGGRTIRYNCTWGRDNVGTTSTDKTINACKIDQCHAAVTSHDKWQFTSPFVPRADQTARKGKVHVPFPLTNVTCRVPLARAPDVTYGKKEVTLRLHPDHPTLFSYRSLGAEPHPYEEWVDKFSERIIPVTEEGXEYQWGNNPPVRLWAXLTTEGKPHGWPHEIIQYYYGLYPAATIAAVSGXSLMALLTLAATCCMLATARRKCLTPYALTPGAVVPLTLGLXXCAPRANA.

The Extracellular segment spans residues 1–359 (SVTEHFNVYK…WPHEIIQYYY (359 aa)). Residues Asn-200 and Asn-262 are each glycosylated (N-linked (GlcNAc...) asparagine; by host). A helical transmembrane segment spans residues 360–382 (GLYPAATIAAVSGXSLMALLTLA). The Cytoplasmic portion of the chain corresponds to 383 to 422 (ATCCMLATARRKCLTPYALTPGAVVPLTLGLXXCAPRANA). 3 S-palmitoyl cysteine; by host lipidation sites follow: Cys-385, Cys-395, and Cys-416. The segment at 395 to 415 (CLTPYALTPGAVVPLTLGLXX) is transient transmembrane before p62-6K protein processing.

Spike glycoprotein E2: Processing of the precursor of protein E3/E2 into E2 and E3 results in a heterodimer of the spike glycoproteins E2 and E1. Spike glycoprotein E2: Spike at virion surface are constituted of three E2-E1 heterodimers. Spike glycoprotein E2: Interacts with 6K protein. In terms of processing, structural polyprotein: Specific enzymatic cleavages in vivo yield mature proteins. Capsid protein is auto-cleaved during polyprotein translation, unmasking a signal peptide at the N-terminus of the precursor of E3/E2. The remaining polyprotein is then targeted to the host endoplasmic reticulum, where host signal peptidase cleaves it into pE2, 6K and E1 proteins. pE2 is further processed to mature E3 and E2 by host furin in trans-Golgi vesicle. Post-translationally, spike glycoprotein E2: Palmitoylated via thioester bonds. These palmitoylations may induce disruption of the C-terminus transmembrane. This would result in the reorientation of E2 C-terminus from lumenal to cytoplasmic side. Spike glycoprotein E2: N-glycosylated.

The protein localises to the virion membrane. It is found in the host cell membrane. Its function is as follows. Spike glycoprotein E2: Plays a role in viral attachment to target host cell, by binding to the cell receptor. Synthesized as a p62 precursor which is processed by furin at the cell membrane just before virion budding, giving rise to E2-E1 heterodimer. The p62-E1 heterodimer is stable, whereas E2-E1 is unstable and dissociate at low pH. p62 is processed at the last step, presumably to avoid E1 fusion activation before its final export to cell surface. E2 C-terminus contains a transitory transmembrane that would be disrupted by palmitoylation, resulting in reorientation of the C-terminal tail from lumenal to cytoplasmic side. This step is critical since E2 C-terminus is involved in budding by interacting with capsid proteins. This release of E2 C-terminus in cytoplasm occurs lately in protein export, and precludes premature assembly of particles at the endoplasmic reticulum membrane. This Ross river virus (strain 213970) (RRV) protein is Structural polyprotein.